A 276-amino-acid polypeptide reads, in one-letter code: Large ribosomal subunit protein uL2c (276 aa).

The segment at 223 to 254 (VVKNPIDHPHGGGEGRSPIGRAKPVTPWGQPA) is disordered.

Belongs to the universal ribosomal protein uL2 family. Part of the 50S ribosomal subunit.

It localises to the plastid. It is found in the chloroplast. This is Large ribosomal subunit protein uL2c (rpl2) from Emiliania huxleyi (Coccolithophore).